A 337-amino-acid polypeptide reads, in one-letter code: Ketol-acid reductoisomerase (NADP(+)) (337 aa).

The region spanning 1–180 (MQVYYDKDAD…GGTKGGVIET (180 aa)) is the KARI N-terminal Rossmann domain. Residues 24–27 (YGSQ), R47, and S51 contribute to the NADP(+) site. The active site involves H106. G132 contributes to the NADP(+) binding site. One can recognise a KARI C-terminal knotted domain in the interval 181–326 (TFREETETDL…ARLRAMMPWI (146 aa)). The Mg(2+) site is built by D189, E193, E225, and E229. S250 contacts substrate.

Belongs to the ketol-acid reductoisomerase family. Mg(2+) is required as a cofactor.

The enzyme catalyses (2R)-2,3-dihydroxy-3-methylbutanoate + NADP(+) = (2S)-2-acetolactate + NADPH + H(+). It carries out the reaction (2R,3R)-2,3-dihydroxy-3-methylpentanoate + NADP(+) = (S)-2-ethyl-2-hydroxy-3-oxobutanoate + NADPH + H(+). Its pathway is amino-acid biosynthesis; L-isoleucine biosynthesis; L-isoleucine from 2-oxobutanoate: step 2/4. The protein operates within amino-acid biosynthesis; L-valine biosynthesis; L-valine from pyruvate: step 2/4. Its function is as follows. Involved in the biosynthesis of branched-chain amino acids (BCAA). Catalyzes an alkyl-migration followed by a ketol-acid reduction of (S)-2-acetolactate (S2AL) to yield (R)-2,3-dihydroxy-isovalerate. In the isomerase reaction, S2AL is rearranged via a Mg-dependent methyl migration to produce 3-hydroxy-3-methyl-2-ketobutyrate (HMKB). In the reductase reaction, this 2-ketoacid undergoes a metal-dependent reduction by NADPH to yield (R)-2,3-dihydroxy-isovalerate. This chain is Ketol-acid reductoisomerase (NADP(+)), found in Neisseria gonorrhoeae (strain ATCC 700825 / FA 1090).